The chain runs to 545 residues: Phenylalanine--tRNA ligase beta subunit (545 aa).

Positions 268-343 (FLHKIQNVRE…MSIGYNNLEP (76 aa)) constitute a B5 domain. Mg(2+)-binding residues include D321, D327, E330, and D331.

It belongs to the phenylalanyl-tRNA synthetase beta subunit family. Type 2 subfamily. As to quaternary structure, tetramer of two alpha and two beta subunits. Mg(2+) is required as a cofactor.

The protein localises to the cytoplasm. It catalyses the reaction tRNA(Phe) + L-phenylalanine + ATP = L-phenylalanyl-tRNA(Phe) + AMP + diphosphate + H(+). This Saccharolobus islandicus (strain L.S.2.15 / Lassen #1) (Sulfolobus islandicus) protein is Phenylalanine--tRNA ligase beta subunit.